Consider the following 557-residue polypeptide: uncharacterized protein (557 aa).

Residues 70 to 224 (KVVEKMNGKA…FNLVSLLKPG (155 aa)) enclose the Helicase ATP-binding domain. Residue 82–90 (ADEVGLGKT) coordinates ATP. Positions 175-178 (DEAH) match the DEAH box motif. The Helicase C-terminal domain occupies 363-524 (QVVDLIKKID…NFEEHLHDIL (162 aa)).

Belongs to the SNF2/RAD54 helicase family.

This is an uncharacterized protein from Bacillus subtilis (strain 168).